Consider the following 132-residue polypeptide: CDGSH iron-sulfur domain-containing protein 2 homolog (132 aa).

At 1–35 (MEPISHVVKSSLPNYLSSLPIPDSFGGWFKLSFKD) the chain is on the lumenal side. The chain crosses the membrane as a helical span at residues 36-58 (WLALIPPTVVVAGLGYTTYLAFC). The Cytoplasmic portion of the chain corresponds to 59–132 (PAARCAGKDS…NVGPVVVKKK (74 aa)). The [2Fe-2S] cluster site is built by Cys-98, Cys-100, Cys-109, and His-113.

This sequence belongs to the CISD protein family. CISD2 subfamily. [2Fe-2S] cluster serves as cofactor.

The protein localises to the endoplasmic reticulum membrane. The chain is CDGSH iron-sulfur domain-containing protein 2 homolog from Drosophila persimilis (Fruit fly).